Consider the following 457-residue polypeptide: Cysteine--tRNA ligase (457 aa).

C31 lines the Zn(2+) pocket. The 'HIGH' region signature appears at 33–43; the sequence is PTVYNYAHIGN. Zn(2+) contacts are provided by C211, H236, and E240. Positions 269–273 match the 'KMSKS' region motif; sequence KMSKS. Position 272 (K272) interacts with ATP.

This sequence belongs to the class-I aminoacyl-tRNA synthetase family. In terms of assembly, monomer. The cofactor is Zn(2+).

Its subcellular location is the cytoplasm. The enzyme catalyses tRNA(Cys) + L-cysteine + ATP = L-cysteinyl-tRNA(Cys) + AMP + diphosphate. This chain is Cysteine--tRNA ligase, found in Xanthomonas campestris pv. campestris (strain ATCC 33913 / DSM 3586 / NCPPB 528 / LMG 568 / P 25).